Reading from the N-terminus, the 246-residue chain is Protein PHLOEM PROTEIN 2-LIKE A1 (246 aa).

Vascular tissues, specifically in phloem companion cell-sieve element complexes.

This is Protein PHLOEM PROTEIN 2-LIKE A1 (PP2A1) from Arabidopsis thaliana (Mouse-ear cress).